Consider the following 80-residue polypeptide: U19-lycotoxin-Ls1a (80 aa).

A signal peptide spans 1–22 (MSPKVQALIFIVGLITLLAAHA). Positions 23 to 34 (QEELSDNIESER) are excised as a propeptide. 4 disulfides stabilise this stretch: cysteine 36-cysteine 50, cysteine 43-cysteine 55, cysteine 49-cysteine 66, and cysteine 57-cysteine 64.

The protein belongs to the neurotoxin 02 (plectoxin) family. 05 (U19-lycotoxin) subfamily. Expressed by the venom gland.

It localises to the secreted. This is U19-lycotoxin-Ls1a from Lycosa singoriensis (Wolf spider).